Reading from the N-terminus, the 466-residue chain is Ras-GEF domain-containing family member 1C (466 aa).

Positions 1-23 are enriched in polar residues; that stretch reads MPQTLSASDMVTPGSLSPPTTEP. 2 disordered regions span residues 1-35 and 443-466; these read MPQT…PLLD and SESP…LGKT. The 131-residue stretch at 34 to 164 folds into the N-terminal Ras-GEF domain; it reads LDGAPSSASL…LLQALHQKLA (131 aa). The region spanning 200–446 is the Ras-GEF domain; sequence DPYTLAQQLT…YLASYESESP (247 aa).

Its function is as follows. Guanine nucleotide exchange factor (GEF). The protein is Ras-GEF domain-containing family member 1C (RASGEF1C) of Macaca fascicularis (Crab-eating macaque).